The chain runs to 370 residues: Putative glutamate--cysteine ligase 2 (370 aa).

This sequence belongs to the glutamate--cysteine ligase type 2 family. YbdK subfamily.

The catalysed reaction is L-cysteine + L-glutamate + ATP = gamma-L-glutamyl-L-cysteine + ADP + phosphate + H(+). ATP-dependent carboxylate-amine ligase which exhibits weak glutamate--cysteine ligase activity. The chain is Putative glutamate--cysteine ligase 2 from Methylibium petroleiphilum (strain ATCC BAA-1232 / LMG 22953 / PM1).